Consider the following 473-residue polypeptide: 3-isopropylmalate dehydratase large subunit (473 aa).

Residues Cys348, Cys413, and Cys416 each contribute to the [4Fe-4S] cluster site.

The protein belongs to the aconitase/IPM isomerase family. LeuC type 1 subfamily. In terms of assembly, heterodimer of LeuC and LeuD. [4Fe-4S] cluster serves as cofactor.

It carries out the reaction (2R,3S)-3-isopropylmalate = (2S)-2-isopropylmalate. It functions in the pathway amino-acid biosynthesis; L-leucine biosynthesis; L-leucine from 3-methyl-2-oxobutanoate: step 2/4. Functionally, catalyzes the isomerization between 2-isopropylmalate and 3-isopropylmalate, via the formation of 2-isopropylmaleate. The polypeptide is 3-isopropylmalate dehydratase large subunit (Parvibaculum lavamentivorans (strain DS-1 / DSM 13023 / NCIMB 13966)).